The following is a 169-amino-acid chain: Large ribosomal subunit protein uL23 (169 aa).

The interval 1–20 (MAGKKVKSNTPKQDLSVSKS) is disordered. Polar residues predominate over residues 8–20 (SNTPKQDLSVSKS).

Belongs to the universal ribosomal protein uL23 family.

This protein binds to a specific region on the 26S rRNA. This chain is Large ribosomal subunit protein uL23 (rpl23a), found in Dictyostelium discoideum (Social amoeba).